Consider the following 128-residue polypeptide: Large ribosomal subunit protein bL12 (128 aa).

The protein belongs to the bacterial ribosomal protein bL12 family. As to quaternary structure, homodimer. Part of the ribosomal stalk of the 50S ribosomal subunit. Forms a multimeric L10(L12)X complex, where L10 forms an elongated spine to which 2 to 4 L12 dimers bind in a sequential fashion. Binds GTP-bound translation factors.

Functionally, forms part of the ribosomal stalk which helps the ribosome interact with GTP-bound translation factors. Is thus essential for accurate translation. In Phenylobacterium zucineum (strain HLK1), this protein is Large ribosomal subunit protein bL12.